A 488-amino-acid chain; its full sequence is Glutamate--tRNA ligase (488 aa).

Residues 9–19 carry the 'HIGH' region motif; the sequence is PSPTGFLHIGG. The Zn(2+) site is built by Cys112, Cys114, Cys139, and His141. The short motif at 256–260 is the 'KMSKS' region element; it reads KLSKR. ATP is bound at residue Lys259.

This sequence belongs to the class-I aminoacyl-tRNA synthetase family. Glutamate--tRNA ligase type 1 subfamily. Monomer. Zn(2+) is required as a cofactor.

Its subcellular location is the cytoplasm. The enzyme catalyses tRNA(Glu) + L-glutamate + ATP = L-glutamyl-tRNA(Glu) + AMP + diphosphate. In terms of biological role, catalyzes the attachment of glutamate to tRNA(Glu) in a two-step reaction: glutamate is first activated by ATP to form Glu-AMP and then transferred to the acceptor end of tRNA(Glu). In Elusimicrobium minutum (strain Pei191), this protein is Glutamate--tRNA ligase.